We begin with the raw amino-acid sequence, 146 residues long: Hemoglobin subunit beta (146 aa).

The residue at position 1 (Val1) is an N-acetylvaline. The region spanning 2 to 146 (HLTGEEKSAV…VANALAHKYH (145 aa)) is the Globin domain. At Thr12 the chain carries Phosphothreonine. Ser44 is subject to Phosphoserine. At Lys59 the chain carries N6-acetyllysine. Residue His63 coordinates heme b. At Lys82 the chain carries N6-acetyllysine. Residue His92 coordinates heme b. Cys93 is modified (S-nitrosocysteine). Lys144 carries the N6-acetyllysine modification.

It belongs to the globin family. Heterotetramer of two alpha chains and two beta chains. Red blood cells.

In terms of biological role, involved in oxygen transport from the lung to the various peripheral tissues. The protein is Hemoglobin subunit beta (HBB) of Saguinus oedipus (Cotton-top tamarin).